The sequence spans 360 residues: Peptide chain release factor 1 (360 aa).

Q237 carries the post-translational modification N5-methylglutamine.

This sequence belongs to the prokaryotic/mitochondrial release factor family. In terms of processing, methylated by PrmC. Methylation increases the termination efficiency of RF1.

It localises to the cytoplasm. Its function is as follows. Peptide chain release factor 1 directs the termination of translation in response to the peptide chain termination codons UAG and UAA. The sequence is that of Peptide chain release factor 1 from Saccharophagus degradans (strain 2-40 / ATCC 43961 / DSM 17024).